We begin with the raw amino-acid sequence, 149 residues long: Small ribosomal subunit protein uS19 (149 aa).

It belongs to the universal ribosomal protein uS19 family.

Its function is as follows. Protein S19 forms a complex with S13 that binds strongly to the 16S ribosomal RNA. The polypeptide is Small ribosomal subunit protein uS19 (Methanopyrus kandleri (strain AV19 / DSM 6324 / JCM 9639 / NBRC 100938)).